The sequence spans 337 residues: MSISELSQDLLEEILCRVPAISLKKLRSTCKLWNSLFIDKRVRNELRRVTVSQVFHCDGLLLYINGVDTIMVVWNPFMGQTRWVQPIARDQTHKYVLGSYQDIKSRITSYKILRYRYTLCGSKLAFEICELYSSSWRVLDITMDFDLYHNSCVSLKGKTYWLTFDKKDRELDMFSFDYATESFGNRMPLPYQFPRCSYETVALSVVREEKLSVLLQLRGTSRKEIWVTNKINETTQVLSWSKVLTLDNSDFGYCPGLSFFVDEEKKQVLCFEKCRVFHIHTNDEVFENKVYTVGEDNKVTQLRFEQSFCPKMDPYVFGYVPSLVQIEQPRRKRKRGD.

The F-box domain maps to 1-46 (MSISELSQDLLEEILCRVPAISLKKLRSTCKLWNSLFIDKRVRNEL).

The chain is Putative F-box protein At4g09870 from Arabidopsis thaliana (Mouse-ear cress).